We begin with the raw amino-acid sequence, 1790 residues long: Protein FAM186A (1790 aa).

Belongs to the FAM186 family.

The polypeptide is Protein FAM186A (FAM186A) (Mus musculus (Mouse)).